The primary structure comprises 504 residues: Xylose import ATP-binding protein XylG (504 aa).

ABC transporter domains follow at residues 6–243 (LEMQ…VGRE) and 262–504 (VRNF…TGGK). ATP is bound at residue 38-45 (GENGAGKS).

This sequence belongs to the ABC transporter superfamily. Xylose importer (TC 3.A.1.2.4) family. The complex is composed of two ATP-binding proteins (XylG), two transmembrane proteins (XylH) and a solute-binding protein (XylF).

The protein resides in the cell membrane. The enzyme catalyses D-xylose(out) + ATP + H2O = D-xylose(in) + ADP + phosphate + H(+). Its function is as follows. Part of the ABC transporter complex XylFGH involved in xylose import. Responsible for energy coupling to the transport system. The protein is Xylose import ATP-binding protein XylG of Moorella thermoacetica (strain ATCC 39073 / JCM 9320).